The following is a 353-amino-acid chain: 3-dehydroquinate synthase (353 aa).

Belongs to the archaeal-type DHQ synthase family.

It catalyses the reaction 2-amino-2,3,7-trideoxy-D-lyxo-hept-6-ulosonate + NAD(+) + H2O = 3-dehydroquinate + NH4(+) + NADH + H(+). Catalyzes the oxidative deamination and cyclization of 2-amino-3,7-dideoxy-D-threo-hept-6-ulosonic acid (ADH) to yield 3-dehydroquinate (DHQ), which is fed into the canonical shikimic pathway of aromatic amino acid biosynthesis. In Nitrosopumilus maritimus (strain SCM1), this protein is 3-dehydroquinate synthase.